Here is a 377-residue protein sequence, read N- to C-terminus: Queuine tRNA-ribosyltransferase (377 aa).

The active-site Proton acceptor is Asp89. Residues 89–93 (DSGGF), Asp143, Gln187, and Gly214 each bind substrate. The RNA binding stretch occupies residues 245-251 (GVGKPED). The active-site Nucleophile is Asp264. Residues 269 to 273 (TRNAR) are RNA binding; important for wobble base 34 recognition. 4 residues coordinate Zn(2+): Cys302, Cys304, Cys307, and His333.

The protein belongs to the queuine tRNA-ribosyltransferase family. As to quaternary structure, homodimer. Within each dimer, one monomer is responsible for RNA recognition and catalysis, while the other monomer binds to the replacement base PreQ1. Zn(2+) is required as a cofactor.

It carries out the reaction 7-aminomethyl-7-carbaguanine + guanosine(34) in tRNA = 7-aminomethyl-7-carbaguanosine(34) in tRNA + guanine. Its pathway is tRNA modification; tRNA-queuosine biosynthesis. Functionally, catalyzes the base-exchange of a guanine (G) residue with the queuine precursor 7-aminomethyl-7-deazaguanine (PreQ1) at position 34 (anticodon wobble position) in tRNAs with GU(N) anticodons (tRNA-Asp, -Asn, -His and -Tyr). Catalysis occurs through a double-displacement mechanism. The nucleophile active site attacks the C1' of nucleotide 34 to detach the guanine base from the RNA, forming a covalent enzyme-RNA intermediate. The proton acceptor active site deprotonates the incoming PreQ1, allowing a nucleophilic attack on the C1' of the ribose to form the product. After dissociation, two additional enzymatic reactions on the tRNA convert PreQ1 to queuine (Q), resulting in the hypermodified nucleoside queuosine (7-(((4,5-cis-dihydroxy-2-cyclopenten-1-yl)amino)methyl)-7-deazaguanosine). The protein is Queuine tRNA-ribosyltransferase of Shewanella halifaxensis (strain HAW-EB4).